The chain runs to 168 residues: Cytolysin secretion protein (168 aa).

This chain is Cytolysin secretion protein (vvhB), found in Vibrio vulnificus (strain CMCP6).